The chain runs to 489 residues: Major aspartyl peptidase 1 (489 aa).

An N-terminal signal peptide occupies residues 1 to 16 (MHYLAVALPLLTLALA). A Peptidase A1 domain is found at 101 to 432 (YAGQVSIGTP…RYNPAAIGFA (332 aa)). Residue aspartate 119 is part of the active site. Glycine 121 provides a ligand contact to pepstatin A. Cysteine 132 and cysteine 137 are joined by a disulfide. The pepstatin A site is built by threonine 161, glycine 163, and serine 164. N-linked (GlcNAc...) asparagine glycosylation is present at asparagine 266. A pepstatin A-binding site is contributed by tyrosine 286. The active site involves aspartate 317. Positions 320 and 321 each coordinate pepstatin A. Cysteine 357 and cysteine 391 are joined by a disulfide. Positions 442 to 466 (AGNPSSSTTGGGTSGSNGGGSSSGA) are disordered. Gly residues predominate over residues 450–463 (TGGGTSGSNGGGSS). Residues 456–489 (GSNGGGSSSGAMERKGVQLGWLVGAVAVGVAAMI) constitute a propeptide, removed at pH 5.0; by autocatalysis.

Belongs to the peptidase A1 family. In terms of assembly, monomer. In terms of processing, activated by the autocatalytic cleavage of the propeptide. Cleaved at the end of the propeptide promiscuously from residue 76 to residue 79. C-terminal cleavage by autocatalysis at Gly-456 at the pH optimum indicating a possible regulatory or other function of this propeptide.

Its subcellular location is the secreted. Its activity is regulated as follows. Activated by low pH. Inhibited by pepstatin A with an IC(50) of 1.4 nM. Inhibited by acetyl pepstatin. Inhibited by HIV antiretroviral therapy protease inhibitors including amprenavir and ritonavir. Inhibited by HIV-1 protease inhibitor brecanavir with an approximate IC(50) of 352 nM. Inhibited by HIV-1 protease inhibitors CGP53437 and GS-8374. From the tested peptidomimetic inhibitor molecules, macrocycles containing P2-P3' tethered side chains, statines in P1 and an alpha amino acid in P2' are the best. From the linear peptidomimetic inhibitors, the ones with a phenylstatine or hydroxyethylamine scissile bond isoster are better than compounds with a reduced bond or a homo-amide. Overall, inhibitors with a phenylalanine side chain, either unsubstituted or with a small substituent, is preferred in P1 while a bulkier P1 side chain leads to lower inhibition. Its function is as follows. Possesses prevalent extracellular endopeptidase activity at low pH condition. Required for high-density growth in acidic environments. Broad substrate specificity with preference cleavage of the peptide substrate between hydrophobic amino acids. Cleaves substrate at P1-P1' between Phe-Leu. Positively charged amino acids are preferred at P2. Prefers hydrophobic amino acids at the P3 and P4 positions. Cleaves substrate also at P1'-P2' between Leu-Val to some degree. Required for virulence in mouse inhalation model of infection. This Cryptococcus neoformans var. grubii serotype A (strain H99 / ATCC 208821 / CBS 10515 / FGSC 9487) (Filobasidiella neoformans var. grubii) protein is Major aspartyl peptidase 1.